The chain runs to 60 residues: Large ribosomal subunit protein uL30 (60 aa).

This sequence belongs to the universal ribosomal protein uL30 family. In terms of assembly, part of the 50S ribosomal subunit.

This Dehalococcoides mccartyi (strain ATCC BAA-2266 / KCTC 15142 / 195) (Dehalococcoides ethenogenes (strain 195)) protein is Large ribosomal subunit protein uL30.